The sequence spans 204 residues: Holliday junction branch migration complex subunit RuvA (204 aa).

The segment at 1–64 (MIARLRGTLL…EDGQTLFGFR (64 aa)) is domain I. Positions 65–143 (TRAERDLFRR…GVGGGSTAAP (79 aa)) are domain II. A flexible linker region spans residues 144 to 153 (AAGADHPTGE). The segment at 153 to 204 (ENDPVSEAIEGLVALGYKPPEAARMARNAAEPELGCEAIIRRALQRAVPRGG) is domain III.

It belongs to the RuvA family. In terms of assembly, homotetramer. Forms an RuvA(8)-RuvB(12)-Holliday junction (HJ) complex. HJ DNA is sandwiched between 2 RuvA tetramers; dsDNA enters through RuvA and exits via RuvB. An RuvB hexamer assembles on each DNA strand where it exits the tetramer. Each RuvB hexamer is contacted by two RuvA subunits (via domain III) on 2 adjacent RuvB subunits; this complex drives branch migration. In the full resolvosome a probable DNA-RuvA(4)-RuvB(12)-RuvC(2) complex forms which resolves the HJ.

It localises to the cytoplasm. In terms of biological role, the RuvA-RuvB-RuvC complex processes Holliday junction (HJ) DNA during genetic recombination and DNA repair, while the RuvA-RuvB complex plays an important role in the rescue of blocked DNA replication forks via replication fork reversal (RFR). RuvA specifically binds to HJ cruciform DNA, conferring on it an open structure. The RuvB hexamer acts as an ATP-dependent pump, pulling dsDNA into and through the RuvAB complex. HJ branch migration allows RuvC to scan DNA until it finds its consensus sequence, where it cleaves and resolves the cruciform DNA. The chain is Holliday junction branch migration complex subunit RuvA from Halorhodospira halophila (strain DSM 244 / SL1) (Ectothiorhodospira halophila (strain DSM 244 / SL1)).